A 442-amino-acid chain; its full sequence is Hydrolase phmG (442 aa).

Serine 259 (nucleophile) is an active-site residue.

It belongs to the AB hydrolase superfamily. FUS2 hydrolase family. Homodimer.

It functions in the pathway mycotoxin biosynthesis. Functionally, hydrolyase; part of the gene cluster that mediates the biosynthesis of the mycotoxins phomacins, leucine-derived cytochalasans with potent actin polymerization-inhibitory activities and monocot-specific antigerminative activities. The first step in the pathway is catalyzed by the hybrid PKS-NRPS phmA, assisted by the enoyl reductase phmE, that are responsible for fusion of the leucine precursor and the polyketide backbone to produce a 2-pyrrolidone intermediate. The polyketide synthase module (PKS) of phmA is responsible for the synthesis of the polyketide backbone and the downstream nonribosomal peptide synthetase (NRPS) amidates the carboxyl end of the polyketide with the leucine precursor. Because phmA lacks a designated enoylreductase (ER) domain, the required activity is provided the enoyl reductase phmE. Reduction by the hydrolyase phmG, followed by dehydration and intra-molecular Diels-Alder cyclization by the Diels-Alderase phmD then yield the required isoindolone-fused macrocycle. A number of oxidative steps catalyzed by the tailoring cytochrome P450 monooxygenase phmB, the FAD-linked oxidoreductase phmC and the short-chain dehydrogenase/reductase phmF, are further required to afford the final products, phomacin D and phomacin E. This is Hydrolase phmG from Phaeosphaeria nodorum (strain SN15 / ATCC MYA-4574 / FGSC 10173) (Glume blotch fungus).